A 1363-amino-acid chain; its full sequence is Spike glycoprotein (1363 aa).

Residues 1–13 (MFLILLISLPMAF) form the signal peptide. Residues 14-1307 (AVIGDLKCTT…GTYEYYVKWP (1294 aa)) are Extracellular-facing. A BetaCoV S1-NTD domain is found at 15 to 298 (VIGDLKCTTV…DFMSEIKCKT (284 aa)). 5 disulfides stabilise this stretch: Cys-21–Cys-165, Cys-160–Cys-193, Cys-172–Cys-252, Cys-286–Cys-296, and Cys-331–Cys-356. N-linked (GlcNAc...) asparagine; by host glycans are attached at residues Asn-59 and Asn-133. The N-linked (GlcNAc...) asparagine; by host glycan is linked to Asn-198. The BetaCoV S1-CTD domain maps to 329 to 617 (PDCNIEAWLN…DVNSGTTCST (289 aa)). Residue Asn-359 is glycosylated (N-linked (GlcNAc...) asparagine; by host). 2 disulfide bridges follow: Cys-374/Cys-427 and Cys-386/Cys-615. 7 N-linked (GlcNAc...) asparagine; by host glycosylation sites follow: Asn-437, Asn-649, Asn-676, Asn-696, Asn-714, Asn-739, and Asn-788. 2 fusion peptide regions span residues 914–935 (SAIEDLLFSKVKLSDVGFVEAY) and 933–953 (EAYNNCTGGAEIRDLICVQSY). Asn-937 carries an N-linked (GlcNAc...) asparagine; by host glycan. Cys-938 and Cys-949 are joined by a disulfide. The segment at 1014–1064 (QKLIANAFNNALDAIQEGFDATNSALVKIQAVVNANAEALNNLLQQLSNRF) is heptad repeat 1. Residues 1043-1087 (QAVVNANAEALNNLLQQLSNRFGAISSSLQEILSRLDALEAQAQI) adopt a coiled-coil conformation. N-linked (GlcNAc...) asparagine; by host glycans are attached at residues Asn-1194, Asn-1224, Asn-1234, Asn-1253, Asn-1267, and Asn-1288. The heptad repeat 2 stretch occupies residues 1258–1296 (APDLSLDYINVTFLDLQDEMNRLQEAIKVLNQSYINLKD). The stretch at 1269–1297 (TFLDLQDEMNRLQEAIKVLNQSYINLKDI) forms a coiled coil. A helical membrane pass occupies residues 1308–1328 (WYVWLLIGFAGVAMLVLLFFI). At 1329–1363 (CCCTGCGTSCFKICGGCCDDYTGHQELVIKTSHDD) the chain is on the cytoplasmic side. Positions 1359 to 1363 (TSHDD) match the KxHxx motif.

This sequence belongs to the betacoronaviruses spike protein family. Homotrimer; each monomer consists of a S1 and a S2 subunit. The resulting peplomers protrude from the virus surface as spikes. Post-translationally, specific enzymatic cleavages in vivo yield mature proteins. The precursor is processed into S1 and S2 by host cell furin or another cellular protease to yield the mature S1 and S2 proteins. Additionally, a second cleavage leads to the release of a fusion peptide after viral attachment to host cell receptor. In terms of processing, the cytoplasmic Cys-rich domain is palmitoylated. Spike glycoprotein is digested within host endosomes.

It localises to the virion membrane. Its subcellular location is the host endoplasmic reticulum-Golgi intermediate compartment membrane. It is found in the host cell membrane. Attaches the virion to the cell membrane by interacting with host receptor, initiating the infection. Its function is as follows. Mediates fusion of the virion and cellular membranes by acting as a class I viral fusion protein. Under the current model, the protein has at least three conformational states: pre-fusion native state, pre-hairpin intermediate state, and post-fusion hairpin state. During viral and target cell membrane fusion, the coiled coil regions (heptad repeats) assume a trimer-of-hairpins structure, positioning the fusion peptide in close proximity to the C-terminal region of the ectodomain. The formation of this structure appears to drive apposition and subsequent fusion of viral and target cell membranes. In terms of biological role, acts as a viral fusion peptide which is unmasked following S2 cleavage occurring upon virus endocytosis. The chain is Spike glycoprotein from Bos taurus (Bovine).